The following is a 151-amino-acid chain: UPF0208 membrane protein YPTB2595 (151 aa).

The next 2 helical transmembrane spans lie at 46–66 (FGIRFMPPLAIFTLTWQIALG) and 69–89 (LGPAIATALFACGLPLQGLWW).

This sequence belongs to the UPF0208 family.

The protein localises to the cell inner membrane. The chain is UPF0208 membrane protein YPTB2595 from Yersinia pseudotuberculosis serotype I (strain IP32953).